A 210-amino-acid polypeptide reads, in one-letter code: Protein DrgA (210 aa).

Belongs to the nitroreductase family. FMN serves as cofactor.

Controls resistance to the herbicide Dinoseb and metronidazole. Involved in detoxification of Dinoseb via the reduction of the nitro group(s) and this process is accompanied by the formation of toxic superoxide anions. The polypeptide is Protein DrgA (drgA) (Synechocystis sp. (strain ATCC 27184 / PCC 6803 / Kazusa)).